The primary structure comprises 238 residues: ATP synthase subunit a (238 aa).

5 consecutive transmembrane segments (helical) span residues 18–38 (LTLL…VFWA), 76–96 (YSLL…LGLF), 114–134 (NLAF…IEGV), 166–186 (SLAI…GLIV), and 193–213 (VYWW…SVFI).

The protein belongs to the ATPase A chain family. In terms of assembly, F-type ATPases have 2 components, CF(1) - the catalytic core - and CF(0) - the membrane proton channel. CF(1) has five subunits: alpha(3), beta(3), gamma(1), delta(1), epsilon(1). CF(0) has three main subunits: a(1), b(2) and c(9-12). The alpha and beta chains form an alternating ring which encloses part of the gamma chain. CF(1) is attached to CF(0) by a central stalk formed by the gamma and epsilon chains, while a peripheral stalk is formed by the delta and b chains.

The protein resides in the cell membrane. Functionally, key component of the proton channel; it plays a direct role in the translocation of protons across the membrane. The polypeptide is ATP synthase subunit a (Streptococcus pyogenes serotype M49 (strain NZ131)).